Consider the following 554-residue polypeptide: Carboxypeptidase Y homolog A (554 aa).

Positions 1–17 are cleaved as a signal peptide; sequence MRISASTVLLGAASAAS. The propeptide occupies 18-137; that stretch reads AASFQNQAQQ…QLDNFNLRVK (120 aa). 5 disulfide bridges follow: Cys-191/Cys-431, Cys-325/Cys-339, Cys-349/Cys-372, Cys-356/Cys-365, and Cys-394/Cys-401. The N-linked (GlcNAc...) asparagine glycan is linked to Asn-222. Ser-278 is a catalytic residue. Asp-470 is an active-site residue. Residue Asn-518 is glycosylated (N-linked (GlcNAc...) asparagine). The active site involves His-529.

Belongs to the peptidase S10 family.

The protein resides in the vacuole. It catalyses the reaction Release of a C-terminal amino acid with broad specificity.. Vacuolar carboxypeptidase involved in degradation of small peptides. Digests preferentially peptides containing an aliphatic or hydrophobic residue in P1' position, as well as methionine, leucine or phenylalanine in P1 position of ester substrate. This Sordaria macrospora (strain ATCC MYA-333 / DSM 997 / K(L3346) / K-hell) protein is Carboxypeptidase Y homolog A (CPYA).